The following is a 588-amino-acid chain: Adenine deaminase (588 aa).

The protein belongs to the metallo-dependent hydrolases superfamily. Adenine deaminase family. In terms of assembly, homodimer. Mn(2+) is required as a cofactor.

It catalyses the reaction adenine + H2O + H(+) = hypoxanthine + NH4(+). The sequence is that of Adenine deaminase from Escherichia coli O81 (strain ED1a).